Here is a 313-residue protein sequence, read N- to C-terminus: Flagellin (313 aa).

2 coiled-coil regions span residues 5 to 33 and 97 to 117; these read INTN…ERLS and VQSE…KEVT. 4 consecutive repeat copies span residues 179 to 197, 199 to 217, 255 to 259, and 262 to 266. A 2 X 19 AA approximate tandem repeats region spans residues 179 to 217; that stretch reads KEAVAAKPAVPAQPAVPADPKNGVAAKPAVPAQPEVKAQ. Residues 190–199 show a composition bias toward low complexity; sequence AQPAVPADPK. The disordered stretch occupies residues 190 to 211; it reads AQPAVPADPKNGVAAKPAVPAQ. A coiled-coil region spans residues 252 to 298; sequence ESTVNNLNNTVNNLSAARSRIEDADYAVEVSNMSRGQILQQAGTSVL. The tract at residues 255–266 is 2 X 5 AA approximate repeats of V-N-N-L-N; it reads VNNLNNTVNNLS.

Belongs to the bacterial flagellin family.

The protein localises to the secreted. The protein resides in the bacterial flagellum. Functionally, flagellin is the subunit protein which polymerizes to form the filaments of bacterial flagella. In Xenorhabdus nematophila (Achromobacter nematophilus), this protein is Flagellin (fliC).